The chain runs to 202 residues: uncharacterized protein (202 aa).

This is an uncharacterized protein from Galliformes (FAdV-1).